Consider the following 308-residue polypeptide: Ecto-ADP-ribosyltransferase 5 (308 aa).

Positions 1-23 (MILEDLLMVLSCLALHILWKVQA) are cleaved as a signal peptide. Cys43 and Cys259 are oxidised to a cystine. Residues 63 to 253 (ALLRESWEAA…IVTLWSYNQT (191 aa)) form the TR mART core domain. An NAD(+)-binding site is contributed by Tyr100. N-linked (GlcNAc...) asparagine glycosylation occurs at Asn102. Arg161 and Gln181 together coordinate NAD(+). Arg161 is a catalytic residue. Ser184 is an active-site residue. The N-linked (GlcNAc...) asparagine glycan is linked to Asn197. Position 215 (Ser215) interacts with NAD(+). The active site involves Glu222. An N-linked (GlcNAc...) asparagine glycan is attached at Asn251.

The protein belongs to the Arg-specific ADP-ribosyltransferase family.

The protein localises to the secreted. Its subcellular location is the membrane. The enzyme catalyses L-arginyl-[protein] + NAD(+) = N(omega)-(ADP-D-ribosyl)-L-arginyl-[protein] + nicotinamide + H(+). The protein is Ecto-ADP-ribosyltransferase 5 (Art5) of Rattus norvegicus (Rat).